The primary structure comprises 231 residues: Orotidine 5'-phosphate decarboxylase (231 aa).

Substrate contacts are provided by residues aspartate 11, lysine 33, 60-69 (DLKFHDIPNT), threonine 120, arginine 181, glutamine 190, glycine 210, and arginine 211. Lysine 62 functions as the Proton donor in the catalytic mechanism.

This sequence belongs to the OMP decarboxylase family. Type 1 subfamily. As to quaternary structure, homodimer.

It carries out the reaction orotidine 5'-phosphate + H(+) = UMP + CO2. It functions in the pathway pyrimidine metabolism; UMP biosynthesis via de novo pathway; UMP from orotate: step 2/2. Functionally, catalyzes the decarboxylation of orotidine 5'-monophosphate (OMP) to uridine 5'-monophosphate (UMP). The sequence is that of Orotidine 5'-phosphate decarboxylase from Photobacterium profundum (strain SS9).